A 187-amino-acid polypeptide reads, in one-letter code: GTP cyclohydrolase 1 (187 aa).

The Zn(2+) site is built by cysteine 79, histidine 82, and cysteine 150.

This sequence belongs to the GTP cyclohydrolase I family. Toroid-shaped homodecamer, composed of two pentamers of five dimers.

The enzyme catalyses GTP + H2O = 7,8-dihydroneopterin 3'-triphosphate + formate + H(+). Its pathway is cofactor biosynthesis; 7,8-dihydroneopterin triphosphate biosynthesis; 7,8-dihydroneopterin triphosphate from GTP: step 1/1. The chain is GTP cyclohydrolase 1 from Fusobacterium nucleatum subsp. nucleatum (strain ATCC 25586 / DSM 15643 / BCRC 10681 / CIP 101130 / JCM 8532 / KCTC 2640 / LMG 13131 / VPI 4355).